A 72-amino-acid polypeptide reads, in one-letter code: Translation initiation factor IF-1 (72 aa).

The region spanning 1 to 72 (MSKEEAIEVE…TRGRITYRAK (72 aa)) is the S1-like domain.

This sequence belongs to the IF-1 family. Component of the 30S ribosomal translation pre-initiation complex which assembles on the 30S ribosome in the order IF-2 and IF-3, IF-1 and N-formylmethionyl-tRNA(fMet); mRNA recruitment can occur at any time during PIC assembly.

It is found in the cytoplasm. Its function is as follows. One of the essential components for the initiation of protein synthesis. Stabilizes the binding of IF-2 and IF-3 on the 30S subunit to which N-formylmethionyl-tRNA(fMet) subsequently binds. Helps modulate mRNA selection, yielding the 30S pre-initiation complex (PIC). Upon addition of the 50S ribosomal subunit IF-1, IF-2 and IF-3 are released leaving the mature 70S translation initiation complex. This chain is Translation initiation factor IF-1, found in Geobacter sulfurreducens (strain ATCC 51573 / DSM 12127 / PCA).